The following is a 214-amino-acid chain: Dual specificity phosphatase 29 (214 aa).

The 149-residue stretch at 46 to 194 (HVNEVWPNLY…LRELDIELAL (149 aa)) folds into the Tyrosine-protein phosphatase domain. A substrate-binding site is contributed by 138–145 (HCAMGRSR). Residue C139 is the Phosphocysteine intermediate of the active site.

This sequence belongs to the protein-tyrosine phosphatase family. Non-receptor class dual specificity subfamily.

It is found in the cytoplasm. It localises to the nucleus. It carries out the reaction O-phospho-L-tyrosyl-[protein] + H2O = L-tyrosyl-[protein] + phosphate. The enzyme catalyses O-phospho-L-seryl-[protein] + H2O = L-seryl-[protein] + phosphate. It catalyses the reaction O-phospho-L-threonyl-[protein] + H2O = L-threonyl-[protein] + phosphate. In terms of biological role, dual specificity phosphatase able to dephosphorylate phosphotyrosine, phosphoserine and phosphothreonine residues within the same substrate, with a preference for phosphotyrosine as a substrate. Involved in the modulation of AMPK and MAPK1/2 signaling pathways. This is Dual specificity phosphatase 29 (DUSP29) from Gallus gallus (Chicken).